We begin with the raw amino-acid sequence, 225 residues long: Probable methylthioribulose-1-phosphate dehydratase (225 aa).

C86 contributes to the substrate binding site. Residues H104 and H106 each coordinate Zn(2+). Residue E127 is the Proton donor/acceptor of the active site. Zn(2+) is bound at residue H183.

The protein belongs to the aldolase class II family. MtnB subfamily. It depends on Zn(2+) as a cofactor.

It localises to the cytoplasm. It carries out the reaction 5-(methylsulfanyl)-D-ribulose 1-phosphate = 5-methylsulfanyl-2,3-dioxopentyl phosphate + H2O. It participates in amino-acid biosynthesis; L-methionine biosynthesis via salvage pathway; L-methionine from S-methyl-5-thio-alpha-D-ribose 1-phosphate: step 2/6. Functionally, catalyzes the dehydration of methylthioribulose-1-phosphate (MTRu-1-P) into 2,3-diketo-5-methylthiopentyl-1-phosphate (DK-MTP-1-P). This chain is Probable methylthioribulose-1-phosphate dehydratase, found in Leishmania infantum.